Consider the following 85-residue polypeptide: Protein MC005 (85 aa).

In terms of assembly, interacts with host IKBKG; this interaction prevents NF-kappa-B activation.

The protein resides in the host cytoplasm. In terms of biological role, plays a role in the inhibition of the host NF-kappa-B pathway by preventing ubiquitin binding-dependent regulation of host IKBKB activation by IKBKG/NEMO. This Molluscum contagiosum virus subtype 1 (MOCV) protein is Protein MC005 (MC005L).